Consider the following 314-residue polypeptide: MRIIYFGTPEFSRIILERISPYLNIIAVVTQPDKPKGRGKRIMCSPVKDFAISKGIPVYQPEKLKGNKEFFEIIRSLNPEALVVASYGKIIPEDILNIPPYGGINVHASVLPKYRGAAPIERAIMNCEKETGVSIMKMERGLDTGPVYAIRKIPILPDDNRGTLSIKLAHLGAELLLEVLPLIKDGKLSPVPQEESLATYAPKLSKEEEIIDWNMRGEKIWCQIRALSPEPGAMTFFRGKILKIFKADFEEKIFNEEIINGTIIEQNKKRGIGVKVNNGILWLLELQPEGKKRMSFLEFMNGYRLNIGERFENS.

Residue 109–112 coordinates (6S)-5,6,7,8-tetrahydrofolate; sequence SVLP.

This sequence belongs to the Fmt family.

The enzyme catalyses L-methionyl-tRNA(fMet) + (6R)-10-formyltetrahydrofolate = N-formyl-L-methionyl-tRNA(fMet) + (6S)-5,6,7,8-tetrahydrofolate + H(+). In terms of biological role, attaches a formyl group to the free amino group of methionyl-tRNA(fMet). The formyl group appears to play a dual role in the initiator identity of N-formylmethionyl-tRNA by promoting its recognition by IF2 and preventing the misappropriation of this tRNA by the elongation apparatus. The polypeptide is Methionyl-tRNA formyltransferase (Dictyoglomus turgidum (strain DSM 6724 / Z-1310)).